A 681-amino-acid polypeptide reads, in one-letter code: Proline-rich receptor-like protein kinase PERK8 (681 aa).

A compositionally biased stretch (pro residues) spans 1 to 11 (MSLVPPLPILS). The tract at residues 1–231 (MSLVPPLPIL…TLPSSSPGKS (231 aa)) is disordered. Over 1 to 237 (MSLVPPLPIL…PGKSEVGTGG (237 aa)) the chain is Extracellular. A glycan (N-linked (GlcNAc...) asparagine) is linked at Asn16. Residues 21 to 163 (APPPLQTQPT…SPPKPSPSTP (143 aa)) show a composition bias toward pro residues. Low complexity predominate over residues 177 to 191 (TSASPPSSNPTDPST). A compositionally biased stretch (pro residues) spans 192–201 (LAPPPTPLPV). The span at 214-229 (PASNNGNNTLPSSSPG) shows a compositional bias: polar residues. Asn220 carries an N-linked (GlcNAc...) asparagine glycan. The chain crosses the membrane as a helical span at residues 238–258 (IVAIGVIVGLVFLSLFVMGVW). Over 259 to 681 (FTRKRKRKDP…GSRDQSRFVP (423 aa)) the chain is Cytoplasmic. Residues 339 to 617 (FSEKNLLGEG…SQVVRALDTL (279 aa)) form the Protein kinase domain. ATP-binding positions include 345–353 (LGEGGFGCV) and Lys367. Phosphotyrosine is present on Tyr412. The active-site Proton acceptor is the Asp463. Phosphoserine occurs at positions 467 and 498. Residues Thr499 and Thr504 each carry the phosphothreonine modification. Residue Tyr512 is modified to Phosphotyrosine.

This sequence belongs to the protein kinase superfamily. Ser/Thr protein kinase family. In terms of assembly, interacts with KIPK1 and KIPK2 (via its cytosolic domain). Mostly expressed in seedlings, roots, inflorescence bolts and flower buds.

The protein localises to the cell membrane. It catalyses the reaction L-seryl-[protein] + ATP = O-phospho-L-seryl-[protein] + ADP + H(+). It carries out the reaction L-threonyl-[protein] + ATP = O-phospho-L-threonyl-[protein] + ADP + H(+). In terms of biological role, could be involved in the negative regulation of root growth. The sequence is that of Proline-rich receptor-like protein kinase PERK8 (PERK8) from Arabidopsis thaliana (Mouse-ear cress).